The following is a 291-amino-acid chain: Short-chain dehydrogenase/reductase GME11359 (291 aa).

The NADP(+) site is built by Leu18, Asp67, Asn96, Tyr177, Lys181, and Val209. Tyr177 acts as the Proton acceptor in catalysis. Catalysis depends on Lys181, which acts as the Lowers pKa of active site Tyr.

The protein belongs to the short-chain dehydrogenases/reductases (SDR) family.

Its pathway is secondary metabolite biosynthesis. Functionally, short-chain dehydrogenase/reductase; part of the gene cluster that mediates the biosynthesis of dibenzodioxocinones such as pestalotiollide B, a novel class of inhibitors against cholesterol ester transfer protein (CEPT). The biosynthesis initiates from condensation of acetate and malonate units catalyzed by the non-reducing PKS pks8/GME11356. Pks8/GME11356 lacks a thioesterase (TE) domain, which is important to the cyclizing of the third ring of atrochrysone carboxylic acid, and the esterase GME11355 might play the role of TE and catalyzes the cyclization reaction of the C ring. The lactamase-like protein GME11357 (or other beta-lactamases in Pestalotiopsis microspora) probably hydrolyzes the thioester bond between the ACP of pks8/GME11356 and the intermediate to release atrochrysone carboxylic acid, which is spontaneously dehydrates to form endocrocin anthrone. Endocrocin anthrone is further converted to emodin via the endocrocin intermediate. Emodin is then oxidized by several enzymes such as the Baeyer-Villiger oxidase GME11358, the oxidoreductase GME11367, the short chain dehydrogenase/reductase GME11373, as well as by other oxidoreductases from the cluster, to modify the A and C rings and open the B ring, and finally yield monodictyphenone. The prenyltransferase GME11375 may catalyze the addition reaction between the C5 side chains and the carbon bone of dibenzodioxocinones. The remaining biochemical reactions to the final product dibenzodioxocinones should be methylation catalyzed by methyltransferase GME11366 and reduction and lactonization reaction catalyzed by a series of oxidordeuctases. This Pestalotiopsis microspora protein is Short-chain dehydrogenase/reductase GME11359.